A 161-amino-acid polypeptide reads, in one-letter code: Regulator of ribonuclease activity A (161 aa).

The protein belongs to the RraA family. As to quaternary structure, homotrimer. Binds to both RNA-binding sites in the C-terminal region of Rne and to RhlB.

It is found in the cytoplasm. Functionally, globally modulates RNA abundance by binding to RNase E (Rne) and regulating its endonucleolytic activity. Can modulate Rne action in a substrate-dependent manner by altering the composition of the degradosome. Modulates RNA-binding and helicase activities of the degradosome. This Shigella flexneri serotype 5b (strain 8401) protein is Regulator of ribonuclease activity A.